A 653-amino-acid chain; its full sequence is Dual specificity protein kinase shkB (653 aa).

Residues 112–133 (NPNNNNNNSNNTNSSDSNQNYS) form a disordered region. The Protein kinase domain maps to 174 to 432 (YNREAKLGSG…FAEISKQRIL (259 aa)). Residues 180–188 (LGSGAFGSV) and Lys201 contribute to the ATP site. Asp298 serves as the catalytic Proton acceptor. The SH2 domain maps to 534–625 (GFMAATSSKN…IKEPFEGGPF (92 aa)).

This sequence belongs to the protein kinase superfamily. TKL Ser/Thr protein kinase family. SH2 domain-containing protein kinase subfamily.

The protein resides in the membrane. The enzyme catalyses L-seryl-[protein] + ATP = O-phospho-L-seryl-[protein] + ADP + H(+). It catalyses the reaction L-threonyl-[protein] + ATP = O-phospho-L-threonyl-[protein] + ADP + H(+). Functionally, required for proper chemotaxis and phagocytosis; proper spatiotemporal control of F-actin levels in chemotaxing cells. Negative regulator of the PI3K (phosphatidylinositol 3 kinase) pathway. Predominantly phosphorylates serines and threonines and tyrosines at a lower level. This Dictyostelium discoideum (Social amoeba) protein is Dual specificity protein kinase shkB (shkB).